Here is a 494-residue protein sequence, read N- to C-terminus: UPF0371 protein SPH_0451 (494 aa).

It belongs to the UPF0371 family.

The polypeptide is UPF0371 protein SPH_0451 (Streptococcus pneumoniae (strain Hungary19A-6)).